A 451-amino-acid chain; its full sequence is UDP-N-acetyl-alpha-D-muramoyl-L-alanyl-L-glutamate epimerase (451 aa).

Belongs to the MurL family.

The catalysed reaction is UDP-N-acetyl-alpha-D-muramoyl-L-alanyl-L-glutamate + ATP + H2O = UDP-N-acetyl-alpha-D-muramoyl-L-alanyl-D-glutamate + AMP + diphosphate + H(+). It functions in the pathway cell wall biogenesis; peptidoglycan biosynthesis. Cell wall formation. Catalyzes epimerization of the terminal L-glutamate in UDP-N-acetyl-alpha-D-muramoyl-L-alanyl-L-glutamate. This chain is UDP-N-acetyl-alpha-D-muramoyl-L-alanyl-L-glutamate epimerase, found in Xanthomonas oryzae pv. oryzae (strain MAFF 311018).